The primary structure comprises 369 residues: Cytoplasmic tRNA 2-thiolation protein 1 (369 aa).

Belongs to the TtcA family. CTU1/NCS6/ATPBD3 subfamily.

It is found in the cytoplasm. It functions in the pathway tRNA modification; 5-methoxycarbonylmethyl-2-thiouridine-tRNA biosynthesis. Functionally, plays a central role in 2-thiolation of mcm(5)S(2)U at tRNA wobble positions of tRNA(Lys), tRNA(Glu) and tRNA(Gln). Directly binds tRNAs and probably acts by catalyzing adenylation of tRNAs, an intermediate required for 2-thiolation. It is unclear whether it acts as a sulfurtransferase that transfers sulfur from thiocarboxylated URM1 onto the uridine of tRNAs at wobble position. Prior mcm(5) tRNA modification by the elongator complex is required for 2-thiolation. May also be involved in protein urmylation. The polypeptide is Cytoplasmic tRNA 2-thiolation protein 1 (Meyerozyma guilliermondii (strain ATCC 6260 / CBS 566 / DSM 6381 / JCM 1539 / NBRC 10279 / NRRL Y-324) (Yeast)).